We begin with the raw amino-acid sequence, 23 residues long: Malate dehydrogenase (23 aa).

Asn7 is an NAD(+) binding site. Arg23 is a substrate binding site.

The protein belongs to the LDH/MDH superfamily. MDH type 1 family. In terms of assembly, homodimer.

The catalysed reaction is (S)-malate + NAD(+) = oxaloacetate + NADH + H(+). The chain is Malate dehydrogenase from Pseudotsuga menziesii (Douglas-fir).